Here is a 273-residue protein sequence, read N- to C-terminus: Salivary glue protein Sgs-3 (273 aa).

The signal sequence occupies residues 1–23; the sequence is MKLTIAISLASILLLSVAHVAQG. Residues 47 to 57 show a composition bias toward low complexity; sequence TTTTTTTTCAP. The segment at 47-225 is disordered; sequence TTTTTTTTCA…TPKPTNKPGC (179 aa). A compositionally biased stretch (pro residues) spans 58–67; the sequence is PTRPPPPPCT. Residues 83-225 are compositionally biased toward low complexity; it reads RRTTTTTRQT…TPKPTNKPGC (143 aa).

The chain is Salivary glue protein Sgs-3 (Sgs3) from Drosophila yakuba (Fruit fly).